We begin with the raw amino-acid sequence, 429 residues long: 3-phosphoshikimate 1-carboxyvinyltransferase (429 aa).

3-phosphoshikimate contacts are provided by lysine 23, serine 24, and arginine 28. Lysine 23 contributes to the phosphoenolpyruvate binding site. Phosphoenolpyruvate is bound by residues glycine 95 and arginine 123. 3-phosphoshikimate contacts are provided by serine 168, glutamine 170, aspartate 316, and lysine 343. Glutamine 170 is a phosphoenolpyruvate binding site. The active-site Proton acceptor is the aspartate 316. 2 residues coordinate phosphoenolpyruvate: arginine 347 and arginine 389.

The protein belongs to the EPSP synthase family. As to quaternary structure, monomer.

It localises to the cytoplasm. It carries out the reaction 3-phosphoshikimate + phosphoenolpyruvate = 5-O-(1-carboxyvinyl)-3-phosphoshikimate + phosphate. It functions in the pathway metabolic intermediate biosynthesis; chorismate biosynthesis; chorismate from D-erythrose 4-phosphate and phosphoenolpyruvate: step 6/7. In terms of biological role, catalyzes the transfer of the enolpyruvyl moiety of phosphoenolpyruvate (PEP) to the 5-hydroxyl of shikimate-3-phosphate (S3P) to produce enolpyruvyl shikimate-3-phosphate and inorganic phosphate. The polypeptide is 3-phosphoshikimate 1-carboxyvinyltransferase (Bacillus cereus (strain B4264)).